We begin with the raw amino-acid sequence, 793 residues long: 3',5'-cyclic-nucleotide phosphodiesterase regA (793 aa).

Residues 1–153 (MNNKQEEIDQ…SSHRVSDFSD (153 aa)) form a disordered region. 3 stretches are compositionally biased toward low complexity: residues 13–34 (SSTSTSPSPSSSSSPSNNDSTS), 54–69 (NKNNNNNNNNNNSNNN), and 80–121 (NNSS…NNNN). The Response regulatory domain maps to 161–280 (RILVADDDDV…LLKKKIDTVL (120 aa)). Asp212 is subject to 4-aspartylphosphate. The 324-residue stretch at 410–733 (RRNSIPTFPQ…ENWQAYMELQ (324 aa)) folds into the PDEase domain. His487 functions as the Proton donor in the catalytic mechanism. A divalent metal cation contacts are provided by His491, His527, Asp528, and Asp639. The segment at 756–793 (KLPKIDEEENRDKVSSSSSSSTAPLTSTSSSNNETSSS) is disordered. Residues 770 to 793 (SSSSSSSTAPLTSTSSSNNETSSS) show a composition bias toward low complexity.

This sequence belongs to the cyclic nucleotide phosphodiesterase family. Requires a divalent metal cation as cofactor. The phosphorelay mechanism involves the sequential transfer of a phosphate group from Asp-212 of pde2 to 'His-65' of rdeA. Phosphorylation of Asp-212 activates the phosphodiesterase domain.

Its subcellular location is the cytoplasm. It localises to the cytosol. The enzyme catalyses 3',5'-cyclic AMP + H2O = AMP + H(+). Inhibited by 3-isobutyl-1-methylxanthine (IBMX). In terms of biological role, phosphodiesterase specific for cAMP. Involved in the degradation of intracellular cAMP. Morphological suppressor of tagB. Phosphorelay protein that accepts phosphate from rdeA or supplies phosphate from regA; depending on the relative concentration of the phosphodonor proteins. The polypeptide is 3',5'-cyclic-nucleotide phosphodiesterase regA (regA) (Dictyostelium discoideum (Social amoeba)).